The primary structure comprises 131 residues: Global transcriptional regulator Spx (131 aa).

The CXXC signature appears at Cys10 to Cys13. A disulfide bridge links Cys10 with Cys13.

It belongs to the ArsC family. Spx subfamily. As to quaternary structure, interacts with the C-terminal domain of the alpha subunit of the RNAP. A single Spx monomer interacts with RNAP to form the transcription activation complex. Interacts with the adapter protein SpxH/YjbH.

It localises to the cytoplasm. With respect to regulation, under non-stress conditions, Spx is degraded by ClpXP and, to a lesser extent, by ClpCP. Efficient dedradation by ClpXP requires the adapter protein SpxH/YjbH. Binding to SpxH/YjbH reduces the overall conformational flexibility of Spx and stabilizes the C-terminal ClpX recognition region of Spx. In addition, activity is modulated by the formation of a disulfide bound within the N-terminal Cys-X-X-Cys (CXXC) motif, which is required for the transcriptional activation of trxA and trxB, or for the activation of msrAB operon expression following paraquat oxidative stress. However, it seems that formation of the disulfide bound is not essential for induction of all Spx-controlled genes, as for example the case of BSH biosynthesis genes. Similarly, induction of the Spx regulon during cell wall stress is not accompanied by oxidation of the disulfide switch, but requires Spx stabilization by the anti-adapter protein SpxO/YirB. In terms of biological role, global transcriptional regulator that plays a key role in stress response and exerts either positive or negative regulation of genes. Acts by interacting with the C-terminal domain of the alpha subunit of the RNA polymerase (RNAP). This interaction can enhance binding of RNAP to the promoter region of target genes and stimulate their transcription, or block interaction of RNAP with activator proteins and repress transcription. Exhibits no DNA-binding activity. Induces the expression of a large number of genes in response to a variety of stress conditions, such as disulfide, heat and cell wall stress, while concurrently repressing transcription of genes involved in various developmental and growth-related pathways during periods of extreme stress. Functions in the oxidative stress response via induction of the transcription of thioredoxin (trxA) and thioredoxin reductase (trxB) during thiol-specific oxidative (disulfide) stress. Mediates response to oxidative stress caused by paraquat (PQ) via induction of the methionine sulfoxide reductase genes, msrA and msrB. Also acts as a transcriptional activator of the bacillithiol (BSH) biosynthesis genes in response to oxidizing conditions and thio-reactive compounds. Involved in heat stress response and thermotolerance development, which results in diminished cellular protein aggregates. Plays an important adaptive role in the cell wall stress response. Participates in sulfate-dependent control of organosulfur metabolism. Negatively controls, via CymR, the expression of the organosulfur utilization operons ytmI, yxeI and ssu, and directly activates yrrT operon expression during growth in medium containing methionine as sole sulfur source. Negatively affects competence and sporulation. Inhibits biofilm formation in response to disulfide stress by repressing biofilm matrix genes. In Bacillus subtilis (strain 168), this protein is Global transcriptional regulator Spx.